Reading from the N-terminus, the 243-residue chain is NAD-dependent protein deacetylase (243 aa).

Residues 1–243 (MKHDLETLKH…VSVVKSLMTE (243 aa)) enclose the Deacetylase sirtuin-type domain. The NAD(+) site is built by Ala-24, Phe-35, Arg-36, Gln-105, Ile-107, Asp-108, and His-123. Residue Phe-35 coordinates nicotinamide. Ile-107 and Asp-108 together coordinate nicotinamide. His-123 acts as the Proton acceptor in catalysis. 4 residues coordinate Zn(2+): Cys-131, Cys-134, Cys-151, and Cys-154. Positions 192, 193, 215, and 232 each coordinate NAD(+).

Belongs to the sirtuin family. Class U subfamily. It depends on Zn(2+) as a cofactor.

It is found in the cytoplasm. It carries out the reaction N(6)-acetyl-L-lysyl-[protein] + NAD(+) + H2O = 2''-O-acetyl-ADP-D-ribose + nicotinamide + L-lysyl-[protein]. In terms of biological role, NAD-dependent protein deacetylase which modulates the activities of several enzymes which are inactive in their acetylated form. This is NAD-dependent protein deacetylase from Staphylococcus aureus (strain COL).